The chain runs to 363 residues: NAD kinase 1 (363 aa).

Residue D68 is the Proton acceptor of the active site. Residues 68–69 (DG), R73, 175–176 (ND), R186, D205, A240, and Q275 each bind NAD(+).

It belongs to the NAD kinase family. The cofactor is a divalent metal cation.

The protein resides in the cytoplasm. The enzyme catalyses NAD(+) + ATP = ADP + NADP(+) + H(+). Functionally, involved in the regulation of the intracellular balance of NAD and NADP, and is a key enzyme in the biosynthesis of NADP. Catalyzes specifically the phosphorylation on 2'-hydroxyl of the adenosine moiety of NAD to yield NADP. This Streptomyces coelicolor (strain ATCC BAA-471 / A3(2) / M145) protein is NAD kinase 1.